Reading from the N-terminus, the 180-residue chain is uncharacterized protein (180 aa).

An N-terminal signal peptide occupies residues 1–24 (MKKKTIFQCVILFFSILNIHVGMA).

Its function is as follows. Part of the elfADCG-ycbUVF fimbrial operon, which promotes adhesion of bacteria to different abiotic surfaces. This is an uncharacterized protein from Escherichia coli (strain K12).